A 204-amino-acid chain; its full sequence is N-(5'-phosphoribosyl)anthranilate isomerase (204 aa).

This sequence belongs to the TrpF family.

The enzyme catalyses N-(5-phospho-beta-D-ribosyl)anthranilate = 1-(2-carboxyphenylamino)-1-deoxy-D-ribulose 5-phosphate. It participates in amino-acid biosynthesis; L-tryptophan biosynthesis; L-tryptophan from chorismate: step 3/5. The protein is N-(5'-phosphoribosyl)anthranilate isomerase of Bacillus cereus (strain AH820).